The sequence spans 169 residues: Ferric-chelate reductase (NAD(P)H) (169 aa).

Y7 contributes to the NADP(+) binding site. FMN-binding positions include 27 to 31, 45 to 52, 82 to 84, and K89; these read QIANT, CLNKENDT, and RKS. NADP(+) is bound by residues H126 and 147–154; that span reads YADYHLMK.

This sequence belongs to the non-flavoprotein flavin reductase family. In terms of assembly, homodimer. FMN is required as a cofactor. It depends on FAD as a cofactor.

The catalysed reaction is 2 a Fe(II)-siderophore + NAD(+) + H(+) = 2 a Fe(III)-siderophore + NADH. The enzyme catalyses 2 a Fe(II)-siderophore + NADP(+) + H(+) = 2 a Fe(III)-siderophore + NADPH. Functionally, catalyzes the reduction of bound ferric iron (Fe(3+)) in a variety of iron chelators (siderophores) using NAD(P)H as the electron donor, resulting in the release of Fe(2+). Not active with uncomplexed Fe(3+). Also reduces FMN and FAD, but not riboflavin. The protein is Ferric-chelate reductase (NAD(P)H) of Archaeoglobus fulgidus (strain ATCC 49558 / DSM 4304 / JCM 9628 / NBRC 100126 / VC-16).